The sequence spans 212 residues: Imidazole glycerol phosphate synthase subunit HisH 2 (212 aa).

The Glutamine amidotransferase type-1 domain maps to 3–212; sequence RVAIIDYGIN…LMSNFLQWNP (210 aa). Cys82 serves as the catalytic Nucleophile. Residues His192 and Glu194 contribute to the active site.

Heterodimer of HisH and HisF.

The protein localises to the cytoplasm. It carries out the reaction 5-[(5-phospho-1-deoxy-D-ribulos-1-ylimino)methylamino]-1-(5-phospho-beta-D-ribosyl)imidazole-4-carboxamide + L-glutamine = D-erythro-1-(imidazol-4-yl)glycerol 3-phosphate + 5-amino-1-(5-phospho-beta-D-ribosyl)imidazole-4-carboxamide + L-glutamate + H(+). The enzyme catalyses L-glutamine + H2O = L-glutamate + NH4(+). It participates in amino-acid biosynthesis; L-histidine biosynthesis; L-histidine from 5-phospho-alpha-D-ribose 1-diphosphate: step 5/9. In terms of biological role, IGPS catalyzes the conversion of PRFAR and glutamine to IGP, AICAR and glutamate. The HisH subunit provides the glutamine amidotransferase activity that produces the ammonia necessary to HisF for the synthesis of IGP and AICAR. This chain is Imidazole glycerol phosphate synthase subunit HisH 2, found in Nitrobacter winogradskyi (strain ATCC 25391 / DSM 10237 / CIP 104748 / NCIMB 11846 / Nb-255).